The sequence spans 259 residues: DNA adenine methylase (259 aa).

Residues Tyr7, Lys11, Asp50, and Asp171 each contribute to the S-adenosyl-L-methionine site.

It belongs to the N(4)/N(6)-methyltransferase family. In terms of assembly, monomer.

The enzyme catalyses a 2'-deoxyadenosine in DNA + S-adenosyl-L-methionine = an N(6)-methyl-2'-deoxyadenosine in DNA + S-adenosyl-L-homocysteine + H(+). An alpha subtpe methyltransferase that recognizes the double-stranded sequence 5'-GATC-3' and methylates A-2 on both strands. May prevent degradation of viral DNA by the host restriction-modification antiviral defense system. The protein is DNA adenine methylase of Enterobacteria phage T2 (Bacteriophage T2).